The sequence spans 210 residues: Dephospho-CoA kinase (210 aa).

In terms of domain architecture, DPCK spans 4-201 (IVALTGGICS…NFYIYLSKQN (198 aa)). 12–17 (CSGKTT) serves as a coordination point for ATP.

It belongs to the CoaE family.

The protein resides in the cytoplasm. The enzyme catalyses 3'-dephospho-CoA + ATP = ADP + CoA + H(+). The protein operates within cofactor biosynthesis; coenzyme A biosynthesis; CoA from (R)-pantothenate: step 5/5. Catalyzes the phosphorylation of the 3'-hydroxyl group of dephosphocoenzyme A to form coenzyme A. In Buchnera aphidicola subsp. Schizaphis graminum (strain Sg), this protein is Dephospho-CoA kinase.